We begin with the raw amino-acid sequence, 318 residues long: tRNA-modifying protein YgfZ (318 aa).

2 residues coordinate folate: Trp-28 and Trp-182.

This sequence belongs to the tRNA-modifying YgfZ family.

It is found in the cytoplasm. Folate-binding protein involved in regulating the level of ATP-DnaA and in the modification of some tRNAs. It is probably a key factor in regulatory networks that act via tRNA modification, such as initiation of chromosomal replication. The protein is tRNA-modifying protein YgfZ of Aliivibrio fischeri (strain MJ11) (Vibrio fischeri).